The primary structure comprises 539 residues: MHDKILILDFGSQVTQLIARRVREAHVYCEIHPNDVSDDFVREFAPKAVILSGSHASTYEDHQLRAPQAVWDLGVPVLGICYGMQTMAVQLGGKVEWSDHREFGYAEMRAHGHTRLLDDIEDFTTAEGHGMLKVWMSHGDKVAELPPGFALMASTPSCPIAGMADEARGYYAVQFHPEVTHTVKGRQIIERFVLQIAGAKPDWIMKNHIEEAVAKIREQVGDEEVILGLSGGVDSSVAAALIHRAIGDQLTCVFVDHGLLRLNEGKMVLDMFEGRLHAKVVHVDASDQFLGHLAGVTDPEAKRKIIGREFVEVFQAEAKKLSKAKWLAQGTIYPDVVESGGTKTKKATTIKSHHNVGGLPETLGLKLLEPLRDLFKDEVRELGVALGLPPEMVYRHPFPGPGLGVRILGEVKREYADLLRRADAIFIEELRGTTATAQDAAAGLCGEADVGKSWYDLTSQAFAVFLPVKSVGVMGDGRTYDYVTSLRAVQTTDFMTAHWAHLPYALLGRASNRIINEVRGINRVVYDISGKPPATIEWE.

Residues 4 to 202 enclose the Glutamine amidotransferase type-1 domain; that stretch reads KILILDFGSQ…VLQIAGAKPD (199 aa). Catalysis depends on C81, which acts as the Nucleophile. Residues H176 and E178 contribute to the active site. One can recognise a GMPS ATP-PPase domain in the interval 203–395; sequence WIMKNHIEEA…LGLPPEMVYR (193 aa). 230-236 lines the ATP pocket; sequence SGGVDSS.

Homodimer.

It carries out the reaction XMP + L-glutamine + ATP + H2O = GMP + L-glutamate + AMP + diphosphate + 2 H(+). It functions in the pathway purine metabolism; GMP biosynthesis; GMP from XMP (L-Gln route): step 1/1. Its function is as follows. Catalyzes the synthesis of GMP from XMP. The sequence is that of GMP synthase [glutamine-hydrolyzing] from Burkholderia cenocepacia (strain ATCC BAA-245 / DSM 16553 / LMG 16656 / NCTC 13227 / J2315 / CF5610) (Burkholderia cepacia (strain J2315)).